Here is a 172-residue protein sequence, read N- to C-terminus: 3-hydroxydecanoyl-[acyl-carrier-protein] dehydratase (172 aa).

The active site involves His-71.

It belongs to the thioester dehydratase family. FabA subfamily. In terms of assembly, homodimer.

It localises to the cytoplasm. The catalysed reaction is a (3R)-hydroxyacyl-[ACP] = a (2E)-enoyl-[ACP] + H2O. It carries out the reaction (3R)-hydroxydecanoyl-[ACP] = (2E)-decenoyl-[ACP] + H2O. It catalyses the reaction (2E)-decenoyl-[ACP] = (3Z)-decenoyl-[ACP]. Its pathway is lipid metabolism; fatty acid biosynthesis. Functionally, necessary for the introduction of cis unsaturation into fatty acids. Catalyzes the dehydration of (3R)-3-hydroxydecanoyl-ACP to E-(2)-decenoyl-ACP and then its isomerization to Z-(3)-decenoyl-ACP. Can catalyze the dehydratase reaction for beta-hydroxyacyl-ACPs with saturated chain lengths up to 16:0, being most active on intermediate chain length. This chain is 3-hydroxydecanoyl-[acyl-carrier-protein] dehydratase, found in Erwinia tasmaniensis (strain DSM 17950 / CFBP 7177 / CIP 109463 / NCPPB 4357 / Et1/99).